Consider the following 409-residue polypeptide: Tryptophan synthase beta chain (409 aa).

K92 bears the N6-(pyridoxal phosphate)lysine mark.

Belongs to the TrpB family. In terms of assembly, tetramer of two alpha and two beta chains. Pyridoxal 5'-phosphate serves as cofactor.

The enzyme catalyses (1S,2R)-1-C-(indol-3-yl)glycerol 3-phosphate + L-serine = D-glyceraldehyde 3-phosphate + L-tryptophan + H2O. Its pathway is amino-acid biosynthesis; L-tryptophan biosynthesis; L-tryptophan from chorismate: step 5/5. Functionally, the beta subunit is responsible for the synthesis of L-tryptophan from indole and L-serine. The protein is Tryptophan synthase beta chain (trpB) of Methanococcus voltae.